We begin with the raw amino-acid sequence, 586 residues long: Chaperonin 60 subunit alpha 1, chloroplastic (586 aa).

A chloroplast-targeting transit peptide spans 1–46 (MASANALSSASVLCSSRQSKLGGGNQQQGQRVSYNKRTIRRFSVRA). Residue Ser90 is modified to Phosphoserine.

It belongs to the chaperonin (HSP60) family. Part of the Cpn60 complex composed of 7 alpha and 7 beta subunits. This complex shows ATPase activity. The Cpn60 complex interacts with the Cpn10 complex. In terms of tissue distribution, expressed in leaves, stems, siliques and flowers.

It is found in the plastid. The protein resides in the chloroplast. Its function is as follows. Binds RuBisCO small and large subunits and is implicated in the assembly of the enzyme oligomer. Involved in protein assisted folding. Required for proper chloroplast development. This Arabidopsis thaliana (Mouse-ear cress) protein is Chaperonin 60 subunit alpha 1, chloroplastic (CPN60A1).